Reading from the N-terminus, the 486-residue chain is ATP synthase subunit beta (486 aa).

Residue 164 to 171 (GGAGVGKT) coordinates ATP.

Belongs to the ATPase alpha/beta chains family. As to quaternary structure, F-type ATPases have 2 components, CF(1) - the catalytic core - and CF(0) - the membrane proton channel. CF(1) has five subunits: alpha(3), beta(3), gamma(1), delta(1), epsilon(1). CF(0) has four main subunits: a(1), b(1), b'(1) and c(9-12).

It localises to the cellular thylakoid membrane. The enzyme catalyses ATP + H2O + 4 H(+)(in) = ADP + phosphate + 5 H(+)(out). In terms of biological role, produces ATP from ADP in the presence of a proton gradient across the membrane. The catalytic sites are hosted primarily by the beta subunits. In Prochlorococcus marinus (strain MIT 9301), this protein is ATP synthase subunit beta.